A 232-amino-acid chain; its full sequence is LOB domain-containing protein 11 (232 aa).

Residues methionine 1–proline 50 are disordered. Residues threonine 34–proline 50 are compositionally biased toward pro residues. The region spanning serine 54 to leucine 155 is the LOB domain. Residues glutamate 181 to asparagine 218 form a disordered region. Residues serine 188 to serine 202 show a composition bias toward low complexity.

This sequence belongs to the LOB domain-containing protein family. In terms of tissue distribution, expressed in young shoots, stems, leaves and flowers.

This chain is LOB domain-containing protein 11 (LBD11), found in Arabidopsis thaliana (Mouse-ear cress).